Here is a 243-residue protein sequence, read N- to C-terminus: Proteasome subunit beta (243 aa).

Positions 1–40 are disordered; sequence MRTPMNNDISGRPDSLNGDRSDVFSPELGEFPNADDRAND. Residues 1–49 constitute a propeptide, removed in mature form; by autocatalysis; that stretch reads MRTPMNNDISGRPDSLNGDRSDVFSPELGEFPNADDRANDIGDMETKTG. Thr-50 (nucleophile) is an active-site residue.

Belongs to the peptidase T1B family. In terms of assembly, the 20S proteasome core is composed of 14 alpha and 14 beta subunits that assemble into four stacked heptameric rings, resulting in a barrel-shaped structure. The two inner rings, each composed of seven catalytic beta subunits, are sandwiched by two outer rings, each composed of seven alpha subunits. The catalytic chamber with the active sites is on the inside of the barrel. Has a gated structure, the ends of the cylinder being occluded by the N-termini of the alpha-subunits. Is capped at one or both ends by the proteasome regulatory ATPase, PAN.

The protein resides in the cytoplasm. The enzyme catalyses Cleavage of peptide bonds with very broad specificity.. The formation of the proteasomal ATPase PAN-20S proteasome complex, via the docking of the C-termini of PAN into the intersubunit pockets in the alpha-rings, triggers opening of the gate for substrate entry. Interconversion between the open-gate and close-gate conformations leads to a dynamic regulation of the 20S proteasome proteolysis activity. Functionally, component of the proteasome core, a large protease complex with broad specificity involved in protein degradation. The polypeptide is Proteasome subunit beta (Haloquadratum walsbyi (strain DSM 16790 / HBSQ001)).